A 218-amino-acid polypeptide reads, in one-letter code: Cytidylate kinase (218 aa).

An ATP-binding site is contributed by 11 to 19; the sequence is GPGASGKGT.

The protein belongs to the cytidylate kinase family. Type 1 subfamily.

The protein resides in the cytoplasm. It carries out the reaction CMP + ATP = CDP + ADP. The catalysed reaction is dCMP + ATP = dCDP + ADP. The protein is Cytidylate kinase of Neisseria meningitidis serogroup A / serotype 4A (strain DSM 15465 / Z2491).